Consider the following 240-residue polypeptide: Zinc import ATP-binding protein ZnuC (240 aa).

The 219-residue stretch at 1–219 (MSLLSIAALD…PAYRAMFGLD (219 aa)) folds into the ABC transporter domain. Position 36–43 (36–43 (GPNGSGKT)) interacts with ATP.

This sequence belongs to the ABC transporter superfamily. Zinc importer (TC 3.A.1.15.5) family. In terms of assembly, the complex is composed of two ATP-binding proteins (ZnuC), two transmembrane proteins (ZnuB) and a solute-binding protein (ZnuA).

The protein resides in the cell inner membrane. It carries out the reaction Zn(2+)(out) + ATP(in) + H2O(in) = Zn(2+)(in) + ADP(in) + phosphate(in) + H(+)(in). Part of the ABC transporter complex ZnuABC involved in zinc import. Responsible for energy coupling to the transport system. This chain is Zinc import ATP-binding protein ZnuC, found in Chromohalobacter salexigens (strain ATCC BAA-138 / DSM 3043 / CIP 106854 / NCIMB 13768 / 1H11).